Reading from the N-terminus, the 102-residue chain is uncharacterized protein (102 aa).

This is an uncharacterized protein from Methanocaldococcus jannaschii (strain ATCC 43067 / DSM 2661 / JAL-1 / JCM 10045 / NBRC 100440) (Methanococcus jannaschii).